An 874-amino-acid polypeptide reads, in one-letter code: Alanine--tRNA ligase (874 aa).

The Zn(2+) site is built by H562, H566, C663, and H667.

This sequence belongs to the class-II aminoacyl-tRNA synthetase family. Zn(2+) is required as a cofactor.

The protein resides in the cytoplasm. The enzyme catalyses tRNA(Ala) + L-alanine + ATP = L-alanyl-tRNA(Ala) + AMP + diphosphate. Functionally, catalyzes the attachment of alanine to tRNA(Ala) in a two-step reaction: alanine is first activated by ATP to form Ala-AMP and then transferred to the acceptor end of tRNA(Ala). Also edits incorrectly charged Ser-tRNA(Ala) and Gly-tRNA(Ala) via its editing domain. This is Alanine--tRNA ligase from Bordetella parapertussis (strain 12822 / ATCC BAA-587 / NCTC 13253).